The following is a 531-amino-acid chain: Polypyrimidine tract-binding protein 2 (531 aa).

An N-acetylmethionine modification is found at M1. A phosphoserine mark is found at S26 and S27. 2 RRM domains span residues 59–133 (RVLH…YSNH) and 181–257 (LRII…FSKL). Residue S308 is modified to Phosphoserine. 2 consecutive RRM domains span residues 338 to 412 (TVLL…LSKH) and 455 to 529 (ATLH…FSKS).

In terms of assembly, monomer. Interacts with NOVA1; the interaction is direct. Identified in a mRNP complex, at least composed of DHX9, DDX3X, ELAVL1, HNRNPU, IGF2BP1, ILF3, PABPC1, PCBP2, PTBP2, STAU1, STAU2, SYNCRIP and YBX1. Part of a ternary complex containing KHSRP and HNRPH1. Interacts with NOVA2; the interaction is direct.

Its subcellular location is the nucleus. Its function is as follows. RNA-binding protein which binds to intronic polypyrimidine tracts and mediates negative regulation of exons splicing. May antagonize in a tissue-specific manner the ability of NOVA1 to activate exon selection. In addition to its function in pre-mRNA splicing, plays also a role in the regulation of translation. This Rattus norvegicus (Rat) protein is Polypyrimidine tract-binding protein 2.